The following is a 117-amino-acid chain: Large ribosomal subunit protein bL20c (117 aa).

The protein belongs to the bacterial ribosomal protein bL20 family.

The protein resides in the plastid. The protein localises to the chloroplast. Functionally, binds directly to 23S ribosomal RNA and is necessary for the in vitro assembly process of the 50S ribosomal subunit. It is not involved in the protein synthesizing functions of that subunit. The sequence is that of Large ribosomal subunit protein bL20c from Vitis vinifera (Grape).